A 228-amino-acid chain; its full sequence is 7-cyano-7-deazaguanine synthase (228 aa).

9-19 (LSGGPDSTTVL) is a binding site for ATP. Zn(2+) contacts are provided by Cys-193, Cys-203, Cys-206, and Cys-209.

The protein belongs to the QueC family. It depends on Zn(2+) as a cofactor.

The enzyme catalyses 7-carboxy-7-deazaguanine + NH4(+) + ATP = 7-cyano-7-deazaguanine + ADP + phosphate + H2O + H(+). The protein operates within purine metabolism; 7-cyano-7-deazaguanine biosynthesis. Its function is as follows. Catalyzes the ATP-dependent conversion of 7-carboxy-7-deazaguanine (CDG) to 7-cyano-7-deazaguanine (preQ(0)). This chain is 7-cyano-7-deazaguanine synthase, found in Rickettsia massiliae (strain Mtu5).